Reading from the N-terminus, the 1275-residue chain is MKKISKCAFVAISALVLIQATQTVKSQEPLVQSQLVTTVALTQDNRLLVEEIGPYASQSAGKEYYKHIEKIIVDNDVYEKSLEGERTFDINYQGIKINADLIKDGKHELTIVNKKDGDILITFIKKGDKVTFISAQKLGTTDHQDSLKKDVLSDKTVPQNQGTQKVVKSGKNTANLSLITKLSQEDGAILFPEIDRYSDNKQIKALTQQITKVTVNGTVYKDLISDSVKDTNGWVSNMTGLHLGTKAFKDGENTIVISSKGFEDVTITVTKKDGQIHFVSAKQKQHVTAEDRQSTKLDVTTLEKAIKEADAIIAKESNKDAVKDLAEKLQVIKDSYKEIKDSKLLADTHRLLKDTIESYQAGEVSINNLTEGTYTLNFKANKENSEESSMLQGAFDKRAKLVVKADGTMEISMLNTALGQFLIDFSIESKGTYPAAVRKQVGQKDINGSYIRSEFTMPIDDLDKLHKGAVLVSAMGGQESDLNHYDKYTKLDMTFSKTVTKGWSGYQVETDDKEKGVGTERLEKVLVKLGKDLDGDGKLSKTELEQIRGELRLDHYELTDISLLKHAKNITELHLDGNQITEIPKELFSQMKQLRFLNLRSNHLTYLDKDTFKSNAQLRELYLSSNFIHSLEGGLFQSLHHLEQLDLSKNRIGRLCDNPFEGLSRLTSLGFAENSLEEIPEKALEPLTSLNFIDLSQNNLALLPKTIEKLRALSTIVASRNHITRIDNISFKNLPKLSVLDLSTNEISNLPNGIFKQNNQLTKLDFFNNLLTQVEESVFPDVETLNLDVKFNQIKSVSPKVRALIGQHKLTPQKHIAKLEASLDGEKIKYHQAFSLLDLYYWEQKTNSAIDKELVSVEEYQQLLQEKGSDTVSLLNDMQVDWSIVIQLQKKASNGQYVTVDEKLLSNDPKDDLTGEFSLKDPGTYRIRKALITKKFATQKEHIYLTSNDILVAKGPHSHQKDLVENGLRALNQKQLRDGIYYLNASMLKTDLASESMSNKAINHRVTLVVKKGVSYLEVEFRGIKVGKMLGYLGELSYFVDGYQRDLAGKPVGRTKKAEVVSYFTDVTGLPLADRYGKNYPKVLRMKLIEQAKKDGLVPLQVFVPIMDAISKGSGLQTVFMRLDWASLTTEKAKVVKETNNPQENSHLTSTDQLKGPQNRQQEKTPTSPPSAATGIANLTDLLAKKATGQSTQETSKTDDTDKAEKLKQLVRDHQTSIEGKTAKDTKTKKSDKKHRSNQQSNGEESSSRYHLIAGLSSFMIVALGFIIGRKTLFK.

The first 26 residues, 1–26 (MKKISKCAFVAISALVLIQATQTVKS), serve as a signal peptide directing secretion. Positions 61 to 123 (GKEYYKHIEK…KKDGDILITF (63 aa)) are HID 1. Heme contacts are provided by threonine 87, arginine 196, tyrosine 197, and methionine 238. The tract at residues 203–269 (IKALTQQITK…KGFEDVTITV (67 aa)) is HID 2. Residues 369 to 501 (LTEGTYTLNF…DMTFSKTVTK (133 aa)) form the NEAT 1 domain. 11 LRR repeats span residues 544-567 (LEQIRGELRLDHYELTDISLLKHA), 568-590 (KNITELHLDGNQITEIPKELFSQ), 592-614 (KQLRFLNLRSNHLTYLDKDTFKS), 616-638 (AQLRELYLSSNFIHSLEGGLFQS), 639-662 (LHHLEQLDLSKNRIGRLCDNPFEG), 664-686 (SRLTSLGFAENSLEEIPEKALEP), 687-710 (LTSLNFIDLSQNNLALLPKTIEKL), 712-733 (ALSTIVASRNHITRIDNISFKN), 734-757 (LPKLSVLDLSTNEISNLPNGIFKQ), 759-781 (NQLTKLDFFNNLLTQVEESVFPD), and 783-804 (ETLNLDVKFNQIKSVSPKVRAL). Residues 976-1138 (LRDGIYYLNA…TTEKAKVVKE (163 aa)) form the NEAT 2 domain. Disordered regions lie at residues 1137 to 1174 (KETNNPQENSHLTSTDQLKGPQNRQQEKTPTSPPSAAT), 1186 to 1205 (KATGQSTQETSKTDDTDKAE), and 1210 to 1248 (LVRDHQTSIEGKTAKDTKTKKSDKKHRSNQQSNGEESSS). Positions 1138–1166 (ETNNPQENSHLTSTDQLKGPQNRQQEKTP) are enriched in polar residues. 2 stretches are compositionally biased toward basic and acidic residues: residues 1196–1205 (SKTDDTDKAE) and 1210–1229 (LVRDHQTSIEGKTAKDTKTK). The helical transmembrane segment at 1250 to 1269 (YHLIAGLSSFMIVALGFIIG) threads the bilayer.

The protein resides in the cell membrane. Its activity is regulated as follows. May modulate heme uptake according to heme availability. In the presence of high heme concentrations, NEAT 1 facilitates fast heme delivery to Shp, whereas NEAT 2 serves as a temporary storage for heme on the bacterial surface. When heme availability is limiting, heme from NEAT 2 is transferred back to NEAT 1 and from there to Shp. Functionally, hemoprotein receptor that plays a central role in the acquisition of host heme, a source of iron during bacterial infection, and is therefore an important virulence factor. Captures host hemoproteins and their iron-containing heme molecules, and transfers the heme to the cell surface heme-binding protein Shp. Plays a pivotal role in iron acquisition and growth under iron-starvation conditions. Uses a cap and release mechanism in which Shr forms a dynamic complex with hemoglobin that enables the gated release of its most labile heme molecule. This mechanism exploits the hemoglobin beta subunit's inherent weaker affinity for heme, allowing S.pyogenes to preferentially capture only heme-saturated forms of hemoglobin that contain iron. In vitro, binds directly to a variety of heme-containing proteins, including hemoglobin, myoglobin, heme albumin and the hemoglobin-haptoglobin complex. It also binds to and acquires heme from methemoglobin, the ferric form of hemoglobin, which is likely to be a physiologically relevant heme source for the hemolytic group A streptococcus (GAS). Seems to have an inherent ability to reduce the ferric heme present in methemoglobin to ferrous heme and to provide a stable environment for the produced ferrous complex. Does not bind apohemoglobin, apohaptoglobin, fibrinogen or streptavidin, indicating that it specifically recognizes hemoproteins. In terms of biological role, in addition to its role in heme acquisition, functions as an adhesin, contributing to host cell adhesion and hence virulence. Specifically binds to extracellular matrix (ECM) components, including fibronectin and laminin, and mediates bacterial attachment to host epithelial cells. The chain is Streptococcal hemoprotein receptor from Streptococcus pyogenes serotype M1.